A 110-amino-acid chain; its full sequence is Neural hemoglobin (110 aa).

Positions 2–110 (VNWAAVVDDF…HAIDDILSHL (109 aa)) constitute a Globin domain. His-70 provides a ligand contact to heme.

Belongs to the globin family. Homotetramer. Self-associates in the deoxy state. Seems to dissociate upon oxygenation.

Functionally, acts as an oxygen store capable of sustaining neuronal activity in an anoxic environment for 5 to 30 minutes. The chain is Neural hemoglobin from Cerebratulus lacteus (Milky ribbon worm).